Here is a 650-residue protein sequence, read N- to C-terminus: Putative polypeptide N-acetylgalactosaminyltransferase 9 (650 aa).

Over 1–11 (MAFIWRRRSTT) the chain is Cytoplasmic. Residues 12 to 31 (IVKLVAFALAIWFCIAFLVY) form a helical; Signal-anchor for type II membrane protein membrane-spanning segment. The Lumenal segment spans residues 32 to 650 (TDDTRRRAAQ…TLENYDSSKL (619 aa)). Residues 84-154 (NVIGGGGQKQ…NPGELGKPVR (71 aa)) form a disordered region. The segment covering 107-136 (HKADLQAERMRKKAAEQPKKKPQEDSKKVI) has biased composition (basic and acidic residues). Intrachain disulfides connect C198–C432, C423–C499, C535–C554, C577–C590, and C616–C631. Residues 208–317 (LPKTDVIICF…EGWLEPLLDR (110 aa)) are catalytic subdomain A. C216, D249, and R278 together coordinate substrate. D301 provides a ligand contact to Mn(2+). Residues S302 and H303 each coordinate substrate. H303 is a Mn(2+) binding site. N-linked (GlcNAc...) asparagine glycans are attached at residues N321 and N373. The interval 378–440 (PVYSPTMAGG…PCSHVGHIFR (63 aa)) is catalytic subdomain B. Position 437 (H437) interacts with Mn(2+). R440 and Y445 together coordinate substrate. One can recognise a Ricin B-type lectin domain in the interval 521-643 (AHGEIRNLGY…SLSRQQWTLE (123 aa)).

This sequence belongs to the glycosyltransferase 2 family. GalNAc-T subfamily. In terms of assembly, isoform A forms homotetramer. Isoform B forms homodimer. It depends on Mn(2+) as a cofactor.

It is found in the golgi apparatus membrane. The enzyme catalyses L-seryl-[protein] + UDP-N-acetyl-alpha-D-galactosamine = a 3-O-[N-acetyl-alpha-D-galactosaminyl]-L-seryl-[protein] + UDP + H(+). The catalysed reaction is L-threonyl-[protein] + UDP-N-acetyl-alpha-D-galactosamine = a 3-O-[N-acetyl-alpha-D-galactosaminyl]-L-threonyl-[protein] + UDP + H(+). Its pathway is protein modification; protein glycosylation. Catalyzes the initial reaction in O-linked oligosaccharide biosynthesis, the transfer of an N-acetyl-D-galactosamine residue to a serine or threonine residue on the protein receptor. It can both act as a peptide transferase that transfers GalNAc onto unmodified peptide substrates, and as a glycopeptide transferase that requires the prior addition of a GalNAc on a peptide before adding additional GalNAc moieties. In terms of biological role, N-acetylgalactosaminyltransferase which preferentially O-glycosylates negatively charge substrates. O-glycosylates mucin-like protein Sgs3 in the salivary gland but to a lesser extent than isoform B. By regulating the O-glycosylation of secretory cargo proteins plays a role in the morphology and maturation of salivary gland secretory granules. Functionally, N-acetylgalactosaminyltransferase which preferentially O-glycosylates positively charge substrates. O-glycosylates mucin-like protein Sgs3 in the salivary gland. By regulating the O-glycosylation of secretory cargo proteins, plays a role in the morphology and maturation of salivary gland secretory granules. This Drosophila melanogaster (Fruit fly) protein is Putative polypeptide N-acetylgalactosaminyltransferase 9.